Reading from the N-terminus, the 139-residue chain is Large ribosomal subunit protein bL20 (139 aa).

The protein belongs to the bacterial ribosomal protein bL20 family.

Its function is as follows. Binds directly to 23S ribosomal RNA and is necessary for the in vitro assembly process of the 50S ribosomal subunit. It is not involved in the protein synthesizing functions of that subunit. The polypeptide is Large ribosomal subunit protein bL20 (Leuconostoc citreum (strain KM20)).